Reading from the N-terminus, the 392-residue chain is Methylthioribose-1-phosphate isomerase (392 aa).

Asp-267 functions as the Proton donor in the catalytic mechanism.

This sequence belongs to the eIF-2B alpha/beta/delta subunits family. MtnA subfamily.

The protein resides in the cytoplasm. Its subcellular location is the nucleus. It carries out the reaction 5-(methylsulfanyl)-alpha-D-ribose 1-phosphate = 5-(methylsulfanyl)-D-ribulose 1-phosphate. It participates in amino-acid biosynthesis; L-methionine biosynthesis via salvage pathway; L-methionine from S-methyl-5-thio-alpha-D-ribose 1-phosphate: step 1/6. Its function is as follows. Catalyzes the interconversion of methylthioribose-1-phosphate (MTR-1-P) into methylthioribulose-1-phosphate (MTRu-1-P). The chain is Methylthioribose-1-phosphate isomerase from Ajellomyces dermatitidis (strain ER-3 / ATCC MYA-2586) (Blastomyces dermatitidis).